The sequence spans 156 residues: UPF0523 protein C (156 aa).

It belongs to the UPF0523 family.

The polypeptide is UPF0523 protein C (Dictyostelium discoideum (Social amoeba)).